The primary structure comprises 296 residues: Myeloid differentiation primary response protein MyD88 (296 aa).

The region spanning 54–109 (MDFEYLEIRQLETQADPTGRLLDAWQGRPGASVGRLLELLTKLGRDDVLLELGPSI) is the Death domain. Residues 110–155 (EEDCQKYILKQQQEEAEKPLQVAAVDSSVPRTAELAGITTLDDPLG) form an intermediate domain region. Residues 159–293 (ERFDAFICYC…WFWTRLAKAL (135 aa)) enclose the TIR domain. At Ser244 the chain carries Phosphoserine.

As to quaternary structure, homodimer. Also forms heterodimers with TIRAP. Binds to TLR2, TLR5, IRAK1, IRAK2 and IRAK4 via their respective TIR domains. Interacts with IL18R1. Interacts with BMX, IL1RL1, IKBKE and IRF7. Interacts with LRRFIP1 and LRRFIP2; this interaction positively regulates Toll-like receptor (TLR) signaling in response to agonist. Interacts with FLII. LRRFIP1 and LRRFIP2 compete with FLII for MYD88-binding. Interacts with IRF1. Upon IL1B treatment, forms a complex with PELI1, IRAK1, IRAK4 and TRAF6; this complex recruits MAP3K7/TAK1, TAB1 and TAB2 to mediate NF-kappa-B activation. Direct binding of SMAD6 to PELI1 prevents the complex formation and hence negatively regulates IL1R-TLR signaling and eventually NF-kappa-B-mediated gene expression. May interact with PIK3AP1. Interacts (via TIR domain) with DHX9 (via H2A and OB-fold regions); this interaction is direct. Interacts with OTUD4 deubiquitinase; the interaction is direct. Interacts with TLR4. In terms of assembly, (Microbial infection) In case of infection, interacts with uropathogenic E.coli protein TcpC; suppressing Toll-like receptor (TLR)-mediated cytokine production. (Microbial infection) In case of infection, interacts with uropathogenic E.faecalis protein TcpF; suppressing Toll-like receptor (TLR)-mediated cytokine production. As to quaternary structure, (Microbial infection) In case of infection, interacts with B.melitensis protein TcpB. In terms of assembly, (Microbial infection) Interacts with human metapneumovirus protein M2-2; this interaction prevents MYD88-mediated cytokine secretion. Post-translationally, ubiquitinated; undergoes 'Lys-63'-linked polyubiquitination. OTUD4 specifically hydrolyzes 'Lys-63'-linked polyubiquitinated MYD88. Deubiquitinated by USP3 that cleaves 'Lys-63'-linked ubiquitin chains leading to inhibition of MYD88-induced NF-kappa-B signaling. In terms of processing, (Microbial infection) Ubiquitinated by human herpesvirus 8 (KSHV) protein RTA/ORF50, leading to proteasomal degradation ans suppression of TLR4 signaling pathway. In terms of tissue distribution, ubiquitous.

Its subcellular location is the cytoplasm. The protein resides in the nucleus. Its function is as follows. Adapter protein involved in the Toll-like receptor and IL-1 receptor signaling pathway in the innate immune response. Acts via IRAK1, IRAK2, IRF7 and TRAF6, leading to NF-kappa-B activation, cytokine secretion and the inflammatory response. Increases IL-8 transcription. Involved in IL-18-mediated signaling pathway. Activates IRF1 resulting in its rapid migration into the nucleus to mediate an efficient induction of IFN-beta, NOS2/INOS, and IL12A genes. Upon TLR8 activation by GU-rich single-stranded RNA (GU-rich RNA) derived from viruses such as SARS-CoV-2, SARS-CoV and HIV-1, induces IL1B release through NLRP3 inflammasome activation. MyD88-mediated signaling in intestinal epithelial cells is crucial for maintenance of gut homeostasis and controls the expression of the antimicrobial lectin REG3G in the small intestine. In Homo sapiens (Human), this protein is Myeloid differentiation primary response protein MyD88.